The chain runs to 312 residues: Tetraspanin-17 (312 aa).

A run of 4 helical transmembrane segments spans residues 17-37 (IFSI…LWML), 64-84 (VSLV…CGAV), 89-109 (FLLL…VAMG), and 274-294 (IWIF…GICL).

This sequence belongs to the tetraspanin (TM4SF) family. In terms of tissue distribution, expressed in dopaminergic neurons, head muscles, vulva and spermatheca.

The protein localises to the cell membrane. Its subcellular location is the cell projection. It is found in the dendrite. It localises to the axon. In terms of biological role, protects dopaminergic neurons against oxidative stress-induced neurodegeneration. May act partly via dopamine receptor dop-2 to negatively regulate dopamine reuptake transporter dat-1 activity. Also plays a role in modulating behaviors linked to dopamine signaling. Confers protection against oxidative stress in the whole body. This is Tetraspanin-17 from Caenorhabditis elegans.